Consider the following 43-residue polypeptide: DRDSCVDKSQCGKYGYYGQCDECCKKAGERVGTCVYYKCKCNP.

4 cysteine pairs are disulfide-bonded: C5-C23, C11-C34, C20-C39, and C24-C41.

Belongs to the ergtoxin family. Gamma-KTx 4 subfamily. As to expression, expressed by the venom gland.

It localises to the secreted. In terms of biological role, reversibly blocks Kv11/ERG potassium channels. The polypeptide is Potassium channel toxin gamma-KTx 4.11 (Centruroides noxius (Mexican scorpion)).